A 249-amino-acid chain; its full sequence is uncharacterized protein (249 aa).

The stretch at Lys30–Ala65 forms a coiled coil. The segment at Pro66–Lys97 is disordered.

This is an uncharacterized protein from Dictyostelium discoideum (Social amoeba).